Here is a 337-residue protein sequence, read N- to C-terminus: Large ribosomal subunit protein uL3 (337 aa).

A disordered region spans residues 1–26 (MGHAHAPRRGSLGYSPRVRARSQKPK).

Belongs to the universal ribosomal protein uL3 family. In terms of assembly, part of the 50S ribosomal subunit. Forms a cluster with proteins L14 and L24e.

Its function is as follows. One of the primary rRNA binding proteins, it binds directly near the 3'-end of the 23S rRNA, where it nucleates assembly of the 50S subunit. The polypeptide is Large ribosomal subunit protein uL3 (Methanocella arvoryzae (strain DSM 22066 / NBRC 105507 / MRE50)).